We begin with the raw amino-acid sequence, 473 residues long: Serine palmitoyltransferase 1 (473 aa).

Positions 1–66 (MATATEQWVL…KEELIEEWQP (66 aa)) are interaction with SPTLC2. Residues 16–36 (ALYEAPAYHLILEGILILWII) form a helical membrane-spanning segment. Phosphotyrosine; by ABL is present on Tyr-164.

It belongs to the class-II pyridoxal-phosphate-dependent aminotransferase family. Component of the serine palmitoyltransferase (SPT) complex, which is also composed of SPTLC2 or SPTLC3 and SPTSSA or SPTSSB. The heterodimer with SPTLC2 or SPTLC3 forms the catalytic core of the enzyme, while SPTSSA or SPTSSB subunits determine substrate specificity. SPT also interacts with ORMDL proteins, especially ORMDL3, which negatively regulate SPT activity in the presence of ceramides. Forms dimers of heterodimers with SPTLC2. Interacts with RTN4. Requires pyridoxal 5'-phosphate as cofactor. Post-translationally, phosphorylation at Tyr-164 inhibits activity and promotes cell survival.

The protein localises to the endoplasmic reticulum membrane. The catalysed reaction is L-serine + hexadecanoyl-CoA + H(+) = 3-oxosphinganine + CO2 + CoA. It catalyses the reaction octadecanoyl-CoA + L-serine + H(+) = 3-oxoeicosasphinganine + CO2 + CoA. It carries out the reaction tetradecanoyl-CoA + L-serine + H(+) = 3-oxohexadecasphinganine + CO2 + CoA. The enzyme catalyses dodecanoyl-CoA + L-serine + H(+) = 3-oxotetradecasphinganine + CO2 + CoA. It functions in the pathway lipid metabolism; sphingolipid metabolism. With respect to regulation, SPT complex catalytic activity is negatively regulated by ORMDL proteins, including ORMDL3, in the presence of ceramides. This mechanism allows to maintain ceramide levels at sufficient concentrations for the production of complex sphingolipids, but which prevents the accumulation of ceramides to levels that trigger apoptosis. Component of the serine palmitoyltransferase multisubunit enzyme (SPT) that catalyzes the initial and rate-limiting step in sphingolipid biosynthesis by condensing L-serine and activated acyl-CoA (most commonly palmitoyl-CoA) to form long-chain bases. The SPT complex is also composed of SPTLC2 or SPTLC3 and SPTSSA or SPTSSB. Within this complex, the heterodimer with SPTLC2 or SPTLC3 forms the catalytic core. The composition of the serine palmitoyltransferase (SPT) complex determines the substrate preference. The SPTLC1-SPTLC2-SPTSSA complex shows a strong preference for C16-CoA substrate, while the SPTLC1-SPTLC3-SPTSSA isozyme uses both C14-CoA and C16-CoA as substrates, with a slight preference for C14-CoA. The SPTLC1-SPTLC2-SPTSSB complex shows a strong preference for C18-CoA substrate, while the SPTLC1-SPTLC3-SPTSSB isozyme displays an ability to use a broader range of acyl-CoAs, without apparent preference. Required for adipocyte cell viability and metabolic homeostasis. In Pongo abelii (Sumatran orangutan), this protein is Serine palmitoyltransferase 1 (SPTLC1).